Consider the following 267-residue polypeptide: Thiamine pyrophosphokinase 2 (267 aa).

The protein belongs to the thiamine pyrophosphokinase family. In terms of tissue distribution, expressed in leaves and at lower levels in flowers.

The protein localises to the cytoplasm. The protein resides in the cytosol. It catalyses the reaction thiamine + ATP = thiamine diphosphate + AMP + H(+). It functions in the pathway cofactor biosynthesis; thiamine diphosphate biosynthesis; thiamine diphosphate from thiamine: step 1/1. In terms of biological role, catalyzes the phosphorylation of thiamine to thiamine pyrophosphate (TPP). TPP is an active cofactor for enzymes involved in glycolysis and energy production. Plant leaves require high levels of TPP for photosynthesis and carbohydrate metabolism. The polypeptide is Thiamine pyrophosphokinase 2 (Arabidopsis thaliana (Mouse-ear cress)).